The chain runs to 203 residues: Glycerol-3-phosphate acyltransferase (203 aa).

6 consecutive transmembrane segments (helical) span residues 1-21, 52-72, 73-93, 115-135, 140-160, and 161-181; these read MPAW…GSIP, VGKG…AAAV, ALGS…GAVI, ILLA…LLGI, IVSF…WALG, and QPLP…AAHR.

It belongs to the PlsY family. As to quaternary structure, probably interacts with PlsX.

It is found in the cell inner membrane. The enzyme catalyses an acyl phosphate + sn-glycerol 3-phosphate = a 1-acyl-sn-glycero-3-phosphate + phosphate. It functions in the pathway lipid metabolism; phospholipid metabolism. In terms of biological role, catalyzes the transfer of an acyl group from acyl-phosphate (acyl-PO(4)) to glycerol-3-phosphate (G3P) to form lysophosphatidic acid (LPA). This enzyme utilizes acyl-phosphate as fatty acyl donor, but not acyl-CoA or acyl-ACP. This is Glycerol-3-phosphate acyltransferase from Synechococcus sp. (strain JA-3-3Ab) (Cyanobacteria bacterium Yellowstone A-Prime).